Here is a 387-residue protein sequence, read N- to C-terminus: Chaperone protein DnaJ (387 aa).

A J domain is found at 5 to 70 (DYYEVLGVAK…QKRAAYDRFG (66 aa)). The segment at 140–218 (GKTETIRLPT…CGGAGRVTRE (79 aa)) adopts a CR-type zinc-finger fold. Residues Cys153, Cys156, Cys170, Cys173, Cys192, Cys195, Cys206, and Cys209 each contribute to the Zn(2+) site. CXXCXGXG motif repeat units lie at residues 153-160 (CEVCAGSG), 170-177 (CPTCGGYG), 192-199 (CPNCQGRG), and 206-213 (CAACGGAG).

It belongs to the DnaJ family. Homodimer. The cofactor is Zn(2+).

Its subcellular location is the cytoplasm. Participates actively in the response to hyperosmotic and heat shock by preventing the aggregation of stress-denatured proteins and by disaggregating proteins, also in an autonomous, DnaK-independent fashion. Unfolded proteins bind initially to DnaJ; upon interaction with the DnaJ-bound protein, DnaK hydrolyzes its bound ATP, resulting in the formation of a stable complex. GrpE releases ADP from DnaK; ATP binding to DnaK triggers the release of the substrate protein, thus completing the reaction cycle. Several rounds of ATP-dependent interactions between DnaJ, DnaK and GrpE are required for fully efficient folding. Also involved, together with DnaK and GrpE, in the DNA replication of plasmids through activation of initiation proteins. In Methylobacterium sp. (strain 4-46), this protein is Chaperone protein DnaJ.